Consider the following 98-residue polypeptide: uncharacterized protein (98 aa).

This is an uncharacterized protein from Enterobacteria phage T4 (Bacteriophage T4).